The primary structure comprises 245 residues: Bis(5'-nucleosyl)-tetraphosphatase PrpE [asymmetrical] (245 aa).

The protein belongs to the PrpE family. Ni(2+) serves as cofactor.

It catalyses the reaction P(1),P(4)-bis(5'-guanosyl) tetraphosphate + H2O = GMP + GTP + 2 H(+). Functionally, asymmetrically hydrolyzes Ap4p to yield AMP and ATP. In Geobacillus sp. (strain WCH70), this protein is Bis(5'-nucleosyl)-tetraphosphatase PrpE [asymmetrical].